Reading from the N-terminus, the 185-residue chain is Ribosome-recycling factor (185 aa).

Belongs to the RRF family.

It localises to the cytoplasm. Its function is as follows. Responsible for the release of ribosomes from messenger RNA at the termination of protein biosynthesis. May increase the efficiency of translation by recycling ribosomes from one round of translation to another. The chain is Ribosome-recycling factor from Neorickettsia sennetsu (strain ATCC VR-367 / Miyayama) (Ehrlichia sennetsu).